A 167-amino-acid polypeptide reads, in one-letter code: UPF0225 protein VV1358 (167 aa).

The protein belongs to the UPF0225 family.

This chain is UPF0225 protein VV1358, found in Vibrio vulnificus (strain YJ016).